The chain runs to 43 residues: Cytochrome b559 subunit beta (43 aa).

Residues 18–34 form a helical membrane-spanning segment; the sequence is WLAVHTLAVPSVFFLGA. Position 22 (histidine 22) interacts with heme.

This sequence belongs to the PsbE/PsbF family. As to quaternary structure, heterodimer of an alpha subunit and a beta subunit. PSII is composed of 1 copy each of membrane proteins PsbA, PsbB, PsbC, PsbD, PsbE, PsbF, PsbH, PsbI, PsbJ, PsbK, PsbL, PsbM, PsbT, PsbX, PsbY, PsbZ, Psb30/Ycf12, peripheral proteins PsbO, CyanoQ (PsbQ), PsbU, PsbV and a large number of cofactors. It forms dimeric complexes. The cofactor is heme b.

The protein resides in the cellular thylakoid membrane. In terms of biological role, this b-type cytochrome is tightly associated with the reaction center of photosystem II (PSII). PSII is a light-driven water:plastoquinone oxidoreductase that uses light energy to abstract electrons from H(2)O, generating O(2) and a proton gradient subsequently used for ATP formation. It consists of a core antenna complex that captures photons, and an electron transfer chain that converts photonic excitation into a charge separation. This chain is Cytochrome b559 subunit beta, found in Picosynechococcus sp. (strain ATCC 27264 / PCC 7002 / PR-6) (Agmenellum quadruplicatum).